The chain runs to 381 residues: Probable tRNA sulfurtransferase (381 aa).

Residues 55–163 (GECLENLNKV…DDEAFIYHEK (109 aa)) form the THUMP domain. Residues 181-182 (LV), Lys265, Gly287, and Gln296 each bind ATP.

Belongs to the ThiI family.

Its subcellular location is the cytoplasm. It carries out the reaction [ThiI sulfur-carrier protein]-S-sulfanyl-L-cysteine + a uridine in tRNA + 2 reduced [2Fe-2S]-[ferredoxin] + ATP + H(+) = [ThiI sulfur-carrier protein]-L-cysteine + a 4-thiouridine in tRNA + 2 oxidized [2Fe-2S]-[ferredoxin] + AMP + diphosphate. The catalysed reaction is [ThiS sulfur-carrier protein]-C-terminal Gly-Gly-AMP + S-sulfanyl-L-cysteinyl-[cysteine desulfurase] + AH2 = [ThiS sulfur-carrier protein]-C-terminal-Gly-aminoethanethioate + L-cysteinyl-[cysteine desulfurase] + A + AMP + 2 H(+). Its pathway is cofactor biosynthesis; thiamine diphosphate biosynthesis. Catalyzes the ATP-dependent transfer of a sulfur to tRNA to produce 4-thiouridine in position 8 of tRNAs, which functions as a near-UV photosensor. Also catalyzes the transfer of sulfur to the sulfur carrier protein ThiS, forming ThiS-thiocarboxylate. This is a step in the synthesis of thiazole, in the thiamine biosynthesis pathway. The sulfur is donated as persulfide by IscS. The polypeptide is Probable tRNA sulfurtransferase (Methanobrevibacter smithii (strain ATCC 35061 / DSM 861 / OCM 144 / PS)).